A 137-amino-acid polypeptide reads, in one-letter code: Large ribosomal subunit protein uL16 (137 aa).

The protein belongs to the universal ribosomal protein uL16 family. As to quaternary structure, part of the 50S ribosomal subunit.

In terms of biological role, binds 23S rRNA and is also seen to make contacts with the A and possibly P site tRNAs. This chain is Large ribosomal subunit protein uL16, found in Lactococcus lactis subsp. cremoris (strain SK11).